The following is a 413-amino-acid chain: Argininosuccinate synthase (413 aa).

ATP is bound by residues 14-22 (AYSGGLDTS) and alanine 41. L-citrulline contacts are provided by tyrosine 94 and serine 99. An ATP-binding site is contributed by glycine 124. The L-aspartate site is built by threonine 126, asparagine 130, and aspartate 131. Residue asparagine 130 coordinates L-citrulline. The L-citrulline site is built by arginine 134, serine 185, serine 194, glutamate 270, and tyrosine 282.

This sequence belongs to the argininosuccinate synthase family. Type 1 subfamily. As to quaternary structure, homotetramer.

The protein resides in the cytoplasm. The catalysed reaction is L-citrulline + L-aspartate + ATP = 2-(N(omega)-L-arginino)succinate + AMP + diphosphate + H(+). It participates in amino-acid biosynthesis; L-arginine biosynthesis; L-arginine from L-ornithine and carbamoyl phosphate: step 2/3. The polypeptide is Argininosuccinate synthase (Hyphomonas neptunium (strain ATCC 15444)).